The following is a 342-amino-acid chain: Cathepsin B-like cysteine proteinase 2 (342 aa).

The first 18 residues, 1 to 18, serve as a signal peptide directing secretion; it reads MKYLVLALCTYLCSQSGA. Residues 19 to 86 constitute a propeptide, activation peptide; it reads DENAAQGIPL…VKEDPDPEVD (68 aa). An N-linked (GlcNAc...) asparagine glycan is attached at asparagine 99. Cystine bridges form between cysteine 100-cysteine 128, cysteine 111-cysteine 156, cysteine 147-cysteine 214, cysteine 148-cysteine 152, cysteine 185-cysteine 218, and cysteine 193-cysteine 205. Cysteine 114 is a catalytic residue. A glycan (N-linked (GlcNAc...) asparagine) is linked at asparagine 138. An N-linked (GlcNAc...) asparagine glycan is attached at asparagine 198. Histidine 285 is an active-site residue. An N-linked (GlcNAc...) asparagine glycan is attached at asparagine 296. Asparagine 305 is a catalytic residue.

Belongs to the peptidase C1 family.

Its function is as follows. Expression of the protease correlates with blood-feeding and suggests a role for the protease in blood digestion. The chain is Cathepsin B-like cysteine proteinase 2 (AC-2) from Haemonchus contortus (Barber pole worm).